A 545-amino-acid chain; its full sequence is Glucose-6-phosphate isomerase (545 aa).

Glu-351 (proton donor) is an active-site residue. Active-site residues include His-382 and Lys-510.

Belongs to the GPI family.

Its subcellular location is the cytoplasm. The catalysed reaction is alpha-D-glucose 6-phosphate = beta-D-fructose 6-phosphate. The protein operates within carbohydrate biosynthesis; gluconeogenesis. It participates in carbohydrate degradation; glycolysis; D-glyceraldehyde 3-phosphate and glycerone phosphate from D-glucose: step 2/4. Functionally, catalyzes the reversible isomerization of glucose-6-phosphate to fructose-6-phosphate. This is Glucose-6-phosphate isomerase from Shewanella frigidimarina (strain NCIMB 400).